The chain runs to 337 residues: Basic membrane protein A1 (337 aa).

The signal sequence occupies residues 1-17 (MNKLLLLILFECIIFLS). Cysteine 18 carries N-palmitoyl cysteine lipidation. Cysteine 18 carries the S-diacylglycerol cysteine lipid modification.

The protein belongs to the BMP lipoprotein family. Monomer.

The protein localises to the cell inner membrane. Functionally, immunogenic protein. May be part of an ABC-type nucleoside uptake system involved in the purine salvage pathway. This is Basic membrane protein A1 (bmpA1) from Borrelia garinii subsp. bavariensis (strain ATCC BAA-2496 / DSM 23469 / PBi) (Borreliella bavariensis).